Consider the following 307-residue polypeptide: MKDESSFFTIDHIIELENGQSIRVWETPPKSDTHKKNSTIVIAAGFARRMDHFAGLAEYLSSNGFRVIRYDSLHHVGLSSGQIDEFSMSIGKHSLLIVVGWLRAKGIQNLGIIAASLSARIAYEVINDIDASFLITAVGVVNLQDTLEKALKYDYLRLPIDELPDDLDFEGHNLGSKVFVTDCLKNEWDTLGSTFKAVQGLNIPFIAFTANGDSWVNQSDVEKMIDNIDTTQCKLYSLIGSSHDLGENLVVLRNFYESVTRAAVALDKGSLDLDIEIVEPGFEDLTSTTVKERRLRNKIENELLELA.

Catalysis depends on charge relay system residues serine 116, aspartate 213, and histidine 243.

Belongs to the LuxD family.

The protein operates within lipid metabolism; fatty acid reduction for biolumincescence. Acyl transferase is part of the fatty acid reductase system required for aldehyde biosynthesis; it produces fatty acids for the luminescent reaction. The sequence is that of Acyl transferase from Aliivibrio fischeri (strain ATCC 700601 / ES114) (Vibrio fischeri).